A 442-amino-acid chain; its full sequence is Putative helicase 161L (442 aa).

The Helicase ATP-binding domain maps to 88 to 241 (IDILEKNHSV…LFPIFFGKEK (154 aa)). ATP is bound at residue 101–108 (CFTGFGKT). The short motif at 194 to 197 (DEVH) is the DEAH box element.

Belongs to the DEAD box helicase family. DEAH subfamily.

The protein is Putative helicase 161L of Invertebrate iridescent virus 6 (IIV-6).